A 218-amino-acid chain; its full sequence is Epoxyqueuosine reductase QueH (218 aa).

Positions 22, 23, 101, and 104 each coordinate [4Fe-4S] cluster. A disulfide bridge links cysteine 184 with cysteine 186.

Belongs to the QueH family.

The catalysed reaction is epoxyqueuosine(34) in tRNA + AH2 = queuosine(34) in tRNA + A + H2O. It functions in the pathway tRNA modification; tRNA-queuosine biosynthesis. Catalyzes the conversion of epoxyqueuosine (oQ) to queuosine (Q), which is a hypermodified base found in the wobble positions of tRNA(Asp), tRNA(Asn), tRNA(His) and tRNA(Tyr). In Acinetobacter baylyi (strain ATCC 33305 / BD413 / ADP1), this protein is Epoxyqueuosine reductase QueH.